A 605-amino-acid chain; its full sequence is Dihydrogeodin oxidase (605 aa).

Positions 1 to 18 (MPSLKDWVVAGLVPMTIA) are cleaved as a signal peptide. N-linked (GlcNAc...) asparagine glycans are attached at residues asparagine 27, asparagine 107, and asparagine 112. 3 Plastocyanin-like domains span residues 65-183 (TVTQ…GPSS), 189-347 (DLGP…YDES), and 424-567 (YVDW…KIKP). Cu cation-binding residues include histidine 117, histidine 119, histidine 161, and histidine 163. Residues asparagine 278 and asparagine 467 are each glycosylated (N-linked (GlcNAc...) asparagine). Residues histidine 484, histidine 487, histidine 489, histidine 543, cysteine 544, histidine 545, and histidine 549 each coordinate Cu cation.

It belongs to the multicopper oxidase family. Requires Cu cation as cofactor.

The catalysed reaction is 2 dihydrogeodin + O2 + 2 H(+) = 2 (+)-geodin + 2 H2O. Its pathway is secondary metabolite biosynthesis. Its function is as follows. Dihydrogeodin oxidase; part of the gene cluster that mediates the biosynthesis of geodin, an intermediate in the biosynthesis of other natural products. The pathway begins with the synthesis of atrochrysone thioester by the polyketide synthase (PKS) gedC. The atrochrysone carboxyl ACP thioesterase gedB then breaks the thioester bond and releases the atrochrysone carboxylic acid from gedC. The atrochrysone carboxylic acid is then converted to atrochrysone which is further transformed into emodinanthrone. The next step is performed by the emodinanthrone oxygenase gedH that catalyzes the oxidation of emodinanthrone to emodin. Emodin O-methyltransferase encoded probably by gedA then catalyzes methylation of the 8-hydroxy group of emodin to form questin. Ring cleavage of questin by questin oxidase gedK leads to desmethylsulochrin via several intermediates including questin epoxide. Another methylation step probably catalyzed by methyltransferase gedG leads to the formation of sulochrin which is further converted to dihydrogeodin by the sulochrin halogenase gedL. Finally, the dihydrogeodin oxidase gedJ catalyzes the stereospecific phenol oxidative coupling reaction converting dihydrogeodin to geodin. In Aspergillus terreus (strain NIH 2624 / FGSC A1156), this protein is Dihydrogeodin oxidase.